Consider the following 659-residue polypeptide: DNA ligase (659 aa).

Residues 32-36, 81-82, and glutamate 110 each bind NAD(+); these read DQQYD and SL. The active-site N6-AMP-lysine intermediate is the lysine 112. NAD(+) is bound by residues arginine 133, glutamate 167, lysine 282, and lysine 306. Zn(2+)-binding residues include cysteine 399, cysteine 402, cysteine 415, and cysteine 420. The 78-residue stretch at 582–659 folds into the BRCT domain; that stretch reads IKNNIFKNKK…QEHEFEELIK (78 aa).

Belongs to the NAD-dependent DNA ligase family. LigA subfamily. Mg(2+) is required as a cofactor. It depends on Mn(2+) as a cofactor.

The enzyme catalyses NAD(+) + (deoxyribonucleotide)n-3'-hydroxyl + 5'-phospho-(deoxyribonucleotide)m = (deoxyribonucleotide)n+m + AMP + beta-nicotinamide D-nucleotide.. Its function is as follows. DNA ligase that catalyzes the formation of phosphodiester linkages between 5'-phosphoryl and 3'-hydroxyl groups in double-stranded DNA using NAD as a coenzyme and as the energy source for the reaction. It is essential for DNA replication and repair of damaged DNA. The polypeptide is DNA ligase (Phytoplasma mali (strain AT)).